Here is a 332-residue protein sequence, read N- to C-terminus: Anthranilate phosphoribosyltransferase (332 aa).

5-phospho-alpha-D-ribose 1-diphosphate-binding positions include Gly79, 82–83, Ser87, 89–92, 107–115, and Ser119; these read GD, NIST, and KHGNRSVSS. Gly79 contributes to the anthranilate binding site. Ser91 serves as a coordination point for Mg(2+). Asn110 contacts anthranilate. Arg165 contacts anthranilate. Residues Asp223 and Glu224 each coordinate Mg(2+).

This sequence belongs to the anthranilate phosphoribosyltransferase family. Homodimer. Mg(2+) is required as a cofactor.

It carries out the reaction N-(5-phospho-beta-D-ribosyl)anthranilate + diphosphate = 5-phospho-alpha-D-ribose 1-diphosphate + anthranilate. Its pathway is amino-acid biosynthesis; L-tryptophan biosynthesis; L-tryptophan from chorismate: step 2/5. Its function is as follows. Catalyzes the transfer of the phosphoribosyl group of 5-phosphorylribose-1-pyrophosphate (PRPP) to anthranilate to yield N-(5'-phosphoribosyl)-anthranilate (PRA). The protein is Anthranilate phosphoribosyltransferase of Sodalis glossinidius (strain morsitans).